Reading from the N-terminus, the 343-residue chain is Small ribosomal subunit biogenesis GTPase RsgA (343 aa).

One can recognise a CP-type G domain in the interval 116-275 (RGQLKPVAAN…LIDSPGIREF (160 aa)). GTP contacts are provided by residues 163–166 (NKAD) and 217–225 (GQSGVGKSS). Residues Cys-299, Cys-304, His-306, and Cys-312 each coordinate Zn(2+).

This sequence belongs to the TRAFAC class YlqF/YawG GTPase family. RsgA subfamily. As to quaternary structure, monomer. Associates with 30S ribosomal subunit, binds 16S rRNA. Requires Zn(2+) as cofactor.

It is found in the cytoplasm. Functionally, one of several proteins that assist in the late maturation steps of the functional core of the 30S ribosomal subunit. Helps release RbfA from mature subunits. May play a role in the assembly of ribosomal proteins into the subunit. Circularly permuted GTPase that catalyzes slow GTP hydrolysis, GTPase activity is stimulated by the 30S ribosomal subunit. The protein is Small ribosomal subunit biogenesis GTPase RsgA of Pseudomonas syringae pv. syringae (strain B728a).